An 891-amino-acid chain; its full sequence is Bifunctional aldehyde-alcohol dehydrogenase AdhE (891 aa).

Residues 2-440 (AVTNVAELNA…ENVGPKHLIN (439 aa)) form an aldehyde dehydrogenase region. Residues 110-115 (IVPTTN), Gly-195, and Gly-213 contribute to the NAD(+) site. The active-site Nucleophile is the Cys-246. NAD(+) contacts are provided by Glu-335 and Leu-419. The tract at residues 441-448 (KKTVAKRA) is linker. An alcohol dehydrogenase region spans residues 449 to 891 (ENMLWHKLPK…KAEKKAKKSA (443 aa)). NAD(+) contacts are provided by residues Asp-487, Asp-519, 546–550 (GSPMD), 597–598 (TT), Val-610, Lys-619, and Leu-638. Positions 653, 657, 723, and 737 each coordinate Fe cation.

This sequence in the N-terminal section; belongs to the aldehyde dehydrogenase family. It in the C-terminal section; belongs to the iron-containing alcohol dehydrogenase family. Forms long filaments, called spirosomes. Requires Fe(2+) as cofactor.

The catalysed reaction is acetaldehyde + NAD(+) + CoA = acetyl-CoA + NADH + H(+). It carries out the reaction ethanol + NAD(+) = acetaldehyde + NADH + H(+). It catalyses the reaction a primary alcohol + NAD(+) = an aldehyde + NADH + H(+). In terms of biological role, under fermentative conditions, catalyzes the sequential NADH-dependent reduction of acetyl-CoA to acetaldehyde and then to ethanol. Plays an important role in virulence and is critical for proper regulation of virulence gene expression. The protein is Bifunctional aldehyde-alcohol dehydrogenase AdhE of Escherichia coli O157:H7.